Consider the following 355-residue polypeptide: Acidic fibroblast growth factor intracellular-binding protein B (355 aa).

Interacts with IER2.

It localises to the nucleus. Its subcellular location is the endomembrane system. In terms of biological role, mediates with IER2 FGF-signaling in Kupffer's vesicle ciliogenesis and in the establishment of laterality in the embryo. May be involved in mitogenic function of FGF1. The protein is Acidic fibroblast growth factor intracellular-binding protein B of Danio rerio (Zebrafish).